Consider the following 593-residue polypeptide: MVEQTVVREHIKARVMSLVRSAEPSSYRNPKLYTLNENGNNNGVSSAQIFDPDRSKNPCLTDDSYPSQSYEKYFLDSPTDEFVQHPIGSGASVSSFGSLDSFPYQSRPVLGCSMEFQLPLDSTSTSSTRLLGDYQAVSYSPSMDVVEEFDDEQMRSKIQELERALLGDEDDKMVGIDNLMEIDSEWSYQNESEQHQDSPKESSSADSNSHVSSKEVVSQATPKQILISCARALSEGKLEEALSMVNELRQIVSIQGDPSQRIAAYMVEGLAARMAASGKFIYRALKCKEPPSDERLAAMQVLFEVCPCFKFGFLAANGAILEAIKGEEEVHIIDFDINQGNQYMTLIRSIAELPGKRPRLRLTGIDDPESVQRSIGGLRIIGLRLEQLAEDNGVSFKFKAMPSKTSIVSPSTLGCKPGETLIVNFAFQLHHMPDESVTTVNQRDELLHMVKSLNPKLVTVVEQDVNTNTSPFFPRFIEAYEYYSAVFESLDMTLPRESQERMNVERQCLARDIVNIVACEGEERIERYEAAGKWRARMMMAGFNPKPMSAKVTNNIQNLIKQQYCNKYKLKEEMGELHFCWEEKSLIVASAWR.

Disordered regions lie at residues 29 to 61 (NPKL…PCLT) and 188 to 216 (YQNE…SKEV). Polar residues predominate over residues 35-48 (LNENGNNNGVSSAQ). Residues 202-211 (SSSADSNSHV) show a composition bias toward low complexity. Residues 213-593 (SKEVVSQATP…KSLIVASAWR (381 aa)) enclose the GRAS domain. A leucine repeat I (LRI) region spans residues 220–280 (ATPKQILISC…AARMAASGKF (61 aa)). The VHIID stretch occupies residues 299 to 364 (MQVLFEVCPC…GKRPRLRLTG (66 aa)). Residues 330–334 (VHIID) carry the VHIID motif. Residues 380–411 (IIGLRLEQLAEDNGVSFKFKAMPSKTSIVSPS) are leucine repeat II (LRII). Positions 421 to 515 (LIVNFAFQLH…RQCLARDIVN (95 aa)) are PFYRE. Residues 518 to 593 (ACEGEERIER…KSLIVASAWR (76 aa)) form an SAW region.

The protein belongs to the GRAS family. As to expression, expressed in seedlings, roots, shoots, leaves, flowers and siliques.

The protein localises to the nucleus. Functionally, probable transcription factor involved in plant development. This is Scarecrow-like protein 1 (SCL1) from Arabidopsis thaliana (Mouse-ear cress).